Here is a 221-residue protein sequence, read N- to C-terminus: Woronin body major protein (221 aa).

Positions 219–221 (SRL) match the Microbody targeting signal motif.

This sequence belongs to the eIF-5A family. Hex1 subfamily. In terms of assembly, forms oligomers. Self-assembles into hexagonal rods.

It localises to the cell septum. Its function is as follows. Major component of Woronin bodies, fungal-specific organelles that occlude septal pores in order to separate intact from damaged compartments. Hex1 binds directly or indirectly to the Woronin body tether that in turn is anchored at the rim of the septal pore. The polypeptide is Woronin body major protein (Emericella nidulans (strain FGSC A4 / ATCC 38163 / CBS 112.46 / NRRL 194 / M139) (Aspergillus nidulans)).